A 265-amino-acid chain; its full sequence is Cytochrome c oxidase subunit 3 (265 aa).

6 consecutive transmembrane segments (helical) span residues 41 to 61, 85 to 105, 137 to 157, 162 to 182, 200 to 220, and 245 to 265; these read GGAT…FVWW, GFIL…WAFF, TLIL…ILAG, AVYA…FQGM, FFLA…FLIV, and WHFV…WGGI.

It belongs to the cytochrome c oxidase subunit 3 family. As to quaternary structure, component of the cytochrome c oxidase (complex IV, CIV), a multisubunit enzyme composed of a catalytic core of 3 subunits and several supernumerary subunits. The complex exists as a monomer or a dimer and forms supercomplexes (SCs) in the inner mitochondrial membrane with ubiquinol-cytochrome c oxidoreductase (cytochrome b-c1 complex, complex III, CIII).

It localises to the mitochondrion inner membrane. The enzyme catalyses 4 Fe(II)-[cytochrome c] + O2 + 8 H(+)(in) = 4 Fe(III)-[cytochrome c] + 2 H2O + 4 H(+)(out). Component of the cytochrome c oxidase, the last enzyme in the mitochondrial electron transport chain which drives oxidative phosphorylation. The respiratory chain contains 3 multisubunit complexes succinate dehydrogenase (complex II, CII), ubiquinol-cytochrome c oxidoreductase (cytochrome b-c1 complex, complex III, CIII) and cytochrome c oxidase (complex IV, CIV), that cooperate to transfer electrons derived from NADH and succinate to molecular oxygen, creating an electrochemical gradient over the inner membrane that drives transmembrane transport and the ATP synthase. Cytochrome c oxidase is the component of the respiratory chain that catalyzes the reduction of oxygen to water. Electrons originating from reduced cytochrome c in the intermembrane space (IMS) are transferred via the dinuclear copper A center (CU(A)) of subunit 2 and heme A of subunit 1 to the active site in subunit 1, a binuclear center (BNC) formed by heme A3 and copper B (CU(B)). The BNC reduces molecular oxygen to 2 water molecules using 4 electrons from cytochrome c in the IMS and 4 protons from the mitochondrial matrix. In Triticum aestivum (Wheat), this protein is Cytochrome c oxidase subunit 3 (COX3).